A 67-amino-acid chain; its full sequence is uncharacterized protein (67 aa).

The next 2 membrane-spanning stretches (helical) occupy residues 10–32 (NLSH…TAFI) and 44–66 (ATLT…MGQW).

Its subcellular location is the cell membrane. This is an uncharacterized protein from Archaeoglobus fulgidus (strain ATCC 49558 / DSM 4304 / JCM 9628 / NBRC 100126 / VC-16).